Consider the following 268-residue polypeptide: Type III pantothenate kinase 1 (268 aa).

Aspartate 6–threonine 13 is a binding site for ATP. Residues tyrosine 100 and glycine 107–arginine 110 each bind substrate. Aspartate 109 acts as the Proton acceptor in catalysis. Aspartate 133 is a binding site for K(+). Threonine 136 lines the ATP pocket.

The protein belongs to the type III pantothenate kinase family. As to quaternary structure, homodimer. It depends on NH4(+) as a cofactor. K(+) is required as a cofactor.

Its subcellular location is the cytoplasm. The catalysed reaction is (R)-pantothenate + ATP = (R)-4'-phosphopantothenate + ADP + H(+). The protein operates within cofactor biosynthesis; coenzyme A biosynthesis; CoA from (R)-pantothenate: step 1/5. In terms of biological role, catalyzes the phosphorylation of pantothenate (Pan), the first step in CoA biosynthesis. The chain is Type III pantothenate kinase 1 from Symbiobacterium thermophilum (strain DSM 24528 / JCM 14929 / IAM 14863 / T).